A 202-amino-acid polypeptide reads, in one-letter code: Small ribosomal subunit protein uS4 (202 aa).

The segment at 16–43 is disordered; the sequence is GELPGLSRKTPRRAYPPGQHGQGRRKRS. The S4 RNA-binding domain occupies 90-152; the sequence is MRLDNTVFRL…DNSRRMVETN (63 aa).

The protein belongs to the universal ribosomal protein uS4 family. In terms of assembly, part of the 30S ribosomal subunit. Contacts protein S5. The interaction surface between S4 and S5 is involved in control of translational fidelity.

In terms of biological role, one of the primary rRNA binding proteins, it binds directly to 16S rRNA where it nucleates assembly of the body of the 30S subunit. Functionally, with S5 and S12 plays an important role in translational accuracy. The protein is Small ribosomal subunit protein uS4 of Crocosphaera subtropica (strain ATCC 51142 / BH68) (Cyanothece sp. (strain ATCC 51142)).